A 253-amino-acid chain; its full sequence is Ribonuclease HII (253 aa).

The RNase H type-2 domain occupies 70 to 253 (DLIAGVDEVG…KTFAPIKDIL (184 aa)). The a divalent metal cation site is built by Asp-76, Glu-77, and Asp-168.

It belongs to the RNase HII family. It depends on Mn(2+) as a cofactor. Mg(2+) is required as a cofactor.

The protein localises to the cytoplasm. The catalysed reaction is Endonucleolytic cleavage to 5'-phosphomonoester.. Endonuclease that specifically degrades the RNA of RNA-DNA hybrids. The sequence is that of Ribonuclease HII from Leuconostoc mesenteroides subsp. mesenteroides (strain ATCC 8293 / DSM 20343 / BCRC 11652 / CCM 1803 / JCM 6124 / NCDO 523 / NBRC 100496 / NCIMB 8023 / NCTC 12954 / NRRL B-1118 / 37Y).